Reading from the N-terminus, the 320-residue chain is o-succinylbenzoate synthase (320 aa).

The Proton donor role is filled by Lys133. Residues Asp161, Glu190, and Asp213 each coordinate Mg(2+). Residue Lys235 is the Proton acceptor of the active site.

This sequence belongs to the mandelate racemase/muconate lactonizing enzyme family. MenC type 1 subfamily. A divalent metal cation is required as a cofactor.

The enzyme catalyses (1R,6R)-6-hydroxy-2-succinyl-cyclohexa-2,4-diene-1-carboxylate = 2-succinylbenzoate + H2O. The protein operates within quinol/quinone metabolism; 1,4-dihydroxy-2-naphthoate biosynthesis; 1,4-dihydroxy-2-naphthoate from chorismate: step 4/7. Its pathway is quinol/quinone metabolism; menaquinone biosynthesis. In terms of biological role, converts 2-succinyl-6-hydroxy-2,4-cyclohexadiene-1-carboxylate (SHCHC) to 2-succinylbenzoate (OSB). This chain is o-succinylbenzoate synthase, found in Escherichia coli O7:K1 (strain IAI39 / ExPEC).